The sequence spans 98 residues: MDPNQTNVVPPALHLVDPQIQLTITRMEDAMGQGQNSADPKVYPIILRLGSQLSLSMARRNLDSLEARAFQSTPIVVQMTKLATTEELPDEFVVVTAK.

Positions Val9–Lys98 constitute a 9b domain. Positions Ile46 to Ser54 match the Nuclear export signal motif.

Belongs to the coronavirus group 2 protein 9b family. As to quaternary structure, homodimer. Interacts with host XPO1; this interaction mediates protein ORF9b export out of the nucleus. Interacts with host MAVS. Interacts with protein ORF6.

It is found in the virion. The protein resides in the host cytoplasmic vesicle membrane. Its subcellular location is the host cytoplasm. The protein localises to the host endoplasmic reticulum. It localises to the host nucleus. It is found in the host mitochondrion. Functionally, plays a role in the inhibition of host innate immune response by targeting the mitochondrial-associated adapter MAVS. Mechanistically, usurps the E3 ligase ITCH to trigger the degradation of MAVS, TRAF3, and TRAF6. In addition, causes mitochondrial elongation by triggering ubiquitination and proteasomal degradation of dynamin-like protein 1/DNM1L. This Homo sapiens (Human) protein is ORF9b protein.